The sequence spans 145 residues: Large ribosomal subunit protein uL14m (145 aa).

The N-terminal 30 residues, 1–30 (MAVLTGLFGFFAYVRGAVSQRCFSTSGSLS), are a transit peptide targeting the mitochondrion.

This sequence belongs to the universal ribosomal protein uL14 family. As to quaternary structure, component of the mitochondrial ribosome large subunit (39S) which comprises a 16S rRNA and about 50 distinct proteins. Interacts with MALSU1.

It is found in the mitochondrion. In terms of biological role, may form part of 2 intersubunit bridges in the assembled ribosome. Upon binding to MALSU1, intersubunit bridge formation is blocked, preventing ribosome formation and repressing translation. The polypeptide is Large ribosomal subunit protein uL14m (Mrpl14) (Rattus norvegicus (Rat)).